We begin with the raw amino-acid sequence, 284 residues long: Protein phosphatase 1 regulatory subunit 3B (284 aa).

The PP1-binding motif motif lies at arginine 61–phenylalanine 64. A CBM21 domain is found at arginine 124–threonine 232. Position 260 is a phosphoserine (serine 260).

Interacts with glycogen, PPP1CC catalytic subunit of PP1 and PYGL. Associates with glycogen particles. Forms complexes with debranching enzyme, glycogen phosphorylase, glycogen synthase and phosphorylase kinase which is necessary for its regulation of PP1 activity. As to expression, highly expressed in liver. Moderately expressed in kidney, heart, testis, spleen and lung. Weakly expressed in skeletal muscle (at protein level). Expressed predominantly in liver. Expressed moderately in heart. Expressed weakly in lung, kidney, spleen and skeletal muscle.

Its function is as follows. Acts as a glycogen-targeting subunit for phosphatase PP1. Facilitates interaction of the PP1 with enzymes of the glycogen metabolism and regulates its activity. Suppresses the rate at which PP1 dephosphorylates (inactivates) glycogen phosphorylase and enhances the rate at which it activates glycogen synthase and therefore limits glycogen breakdown. Its activity is inhibited by PYGL, resulting in inhibition of the glycogen synthase and glycogen phosphorylase phosphatase activities of PP1. Dramatically increases basal and insulin-stimulated glycogen synthesis upon overexpression in hepatocytes. The sequence is that of Protein phosphatase 1 regulatory subunit 3B (Ppp1r3b) from Rattus norvegicus (Rat).